We begin with the raw amino-acid sequence, 148 residues long: Small ribosomal subunit protein uS7m (148 aa).

Belongs to the universal ribosomal protein uS7 family. As to quaternary structure, part of the small ribosomal subunit.

It is found in the mitochondrion. Functionally, one of the primary rRNA binding proteins, it binds directly to 18S rRNA where it nucleates assembly of the head domain of the small subunit. This is Small ribosomal subunit protein uS7m (RPS7) from Triticum aestivum (Wheat).